A 558-amino-acid chain; its full sequence is Phosphatidylserine lipase ABHD16A (558 aa).

2 helical membrane-spanning segments follow: residues 60-80 and 93-113; these read ILAL…FAFF and VVPF…VACL. The Cytoplasmic segment spans residues 114 to 558; it reads RGIGRWTNPQ…AQHFQMPWHL (445 aa). The 126-residue stretch at 281-406 folds into the AB hydrolase-1 domain; sequence LVICCEGNAG…ALVTRTVRQH (126 aa). Active-site charge relay system residues include serine 355, aspartate 430, and histidine 507.

This sequence belongs to the AB hydrolase superfamily. ABHD16 family.

It is found in the membrane. It carries out the reaction 1-heptadecanoyl-2-(5Z,8Z,11Z,14Z-eicosatetraenoyl)-sn-glycero-3-phosphoserine + H2O = 1-heptadecanoyl-sn-glycero-3-phosphoserine + (5Z,8Z,11Z,14Z)-eicosatetraenoate + H(+). The catalysed reaction is 1-hexadecanoyl-2-(9Z-octadecenoyl)-sn-glycero-3-phospho-L-serine + H2O = 1-hexadecanoyl-sn-glycero-3-phospho-L-serine + (9Z)-octadecenoate + H(+). The enzyme catalyses 1-octadecanoyl-2-(9Z,12Z-octadecadienoyl)-sn-glycero-3-phosphoserine + H2O = 1-octadecanoyl-sn-glycero-3-phosphoserine + (9Z,12Z)-octadecadienoate + H(+). It catalyses the reaction 1-heptadecanoyl-2-(5Z,8Z,11Z,14Z-eicosatetraenoyl)-sn-glycero-3-phosphocholine + H2O = 1-heptadecanoyl-sn-glycero-3-phosphocholine + (5Z,8Z,11Z,14Z)-eicosatetraenoate + H(+). It carries out the reaction 1-hexadecanoyl-2-(9Z-octadecenoyl)-sn-glycero-3-phosphoglycerol + H2O = 1-hexadecanoyl-sn-glycero-3-phosphoglycerol + (9Z)-octadecenoate + H(+). The catalysed reaction is 1-hexadecanoyl-2-(9Z-octadecenoyl)-sn-glycero-3-phospho-(1D-myo-inositol) + H2O = 1-hexadecanoyl-sn-glycero-3-phospho-(1D-myo-inositol) + (9Z)-octadecenoate + H(+). The enzyme catalyses 1-heptadecanoyl-2-(5Z,8Z,11Z,14Z-eicosatetraenoyl)-sn-glycero-3-phosphoethanolamine + H2O = 1-heptadecanoyl-sn-glycero-3-phosphoethanolamine + (5Z,8Z,11Z,14Z)-eicosatetraenoate + H(+). It catalyses the reaction 1-hexadecanoyl-2-(9Z-octadecenoyl)-sn-glycero-3-phospho-(1'-sn-glycerol) + H2O = 1-hexadecanoyl-sn-glycero-3-phospho-(1'-sn-glycerol) + (9Z)-octadecenoate + H(+). It carries out the reaction Hydrolyzes glycerol monoesters of long-chain fatty acids.. The catalysed reaction is 1-tetradecanoylglycerol + H2O = tetradecanoate + glycerol + H(+). The enzyme catalyses 2-hexadecanoylglycerol + H2O = glycerol + hexadecanoate + H(+). It catalyses the reaction 1-(9Z-octadecenoyl)-glycerol + H2O = glycerol + (9Z)-octadecenoate + H(+). It carries out the reaction 2-(9Z-octadecenoyl)-glycerol + H2O = glycerol + (9Z)-octadecenoate + H(+). The catalysed reaction is 2-(9Z,12Z-octadecadienoyl)-glycerol + H2O = (9Z,12Z)-octadecadienoate + glycerol + H(+). The enzyme catalyses 1-(5Z,8Z,11Z,14Z-eicosatetraenoyl)-glycerol + H2O = glycerol + (5Z,8Z,11Z,14Z)-eicosatetraenoate + H(+). It catalyses the reaction 2-(5Z,8Z,11Z,14Z-eicosatetraenoyl)-glycerol + H2O = glycerol + (5Z,8Z,11Z,14Z)-eicosatetraenoate + H(+). It carries out the reaction prostaglandin D2-1-glycerol ester + H2O = prostaglandin D2 + glycerol + H(+). The catalysed reaction is 2-glyceryl-15-deoxy-Delta(12,14)-prostaglandin J2 + H2O = 15-deoxy-Delta(12,14)-prostaglandin J2 + glycerol + H(+). The enzyme catalyses 1-(9Z,12Z-octadecadienoyl)-glycerol + H2O = (9Z,12Z)-octadecadienoate + glycerol + H(+). With respect to regulation, specifically inhibited by alpha-alkylidene-beta-lactone KC01 ((Z)-6-(2-Oxo-4-tridecyloxetan-3-ylidene)hexanamide). Functionally, phosphatidylserine (PS) lipase that mediates the hydrolysis of phosphatidylserine to generate lysophosphatidylserine (LPS). LPS constitutes a class of signaling lipids that regulates immunological and neurological processes. Has no activity towards diacylglycerol, triacylglycerol or lysophosphatidylserine lipase. Also has monoacylglycerol lipase activity, with preference for 1-(9Z,12Z-octadecadienoyl)-glycerol (1-LG) and 2-glyceryl-15-deoxy-Delta(12,14)-prostaglandin J2 (15d-PGJ(2)-G). This Mus musculus (Mouse) protein is Phosphatidylserine lipase ABHD16A.